Reading from the N-terminus, the 430-residue chain is ATP-dependent RNA helicase RhlB (430 aa).

Residues 9–37 carry the Q motif motif; that stretch reads QKFSDFALHPQVIEALETKGFHNCTPIQA. Residues 40–219 enclose the Helicase ATP-binding domain; sequence LPFTLSGRDV…FENMNNAEYV (180 aa). 53–60 contributes to the ATP binding site; the sequence is AQTGTGKT. The DEAD box motif lies at 165–168; that stretch reads DEAD. The Helicase C-terminal domain maps to 245 to 390; that stretch reads RLLQTLIEEE…VSRYNSDALM (146 aa). Positions 388–430 are disordered; it reads ALMTDLPPPKRLTRNRSGNGPRRGGNNNRRSSASRSPNRKRSG. Positions 402 to 423 are enriched in low complexity; that stretch reads NRSGNGPRRGGNNNRRSSASRS.

Belongs to the DEAD box helicase family. RhlB subfamily. In terms of assembly, component of the RNA degradosome, which is a multiprotein complex involved in RNA processing and mRNA degradation.

It is found in the cytoplasm. The catalysed reaction is ATP + H2O = ADP + phosphate + H(+). Functionally, DEAD-box RNA helicase involved in RNA degradation. Has RNA-dependent ATPase activity and unwinds double-stranded RNA. In Erwinia tasmaniensis (strain DSM 17950 / CFBP 7177 / CIP 109463 / NCPPB 4357 / Et1/99), this protein is ATP-dependent RNA helicase RhlB.